A 295-amino-acid polypeptide reads, in one-letter code: UDP-N-acetylenolpyruvoylglucosamine reductase (295 aa).

In terms of domain architecture, FAD-binding PCMH-type spans 26–189 (VGGRADILFK…VEAEFKGVNS (164 aa)). Arg169 is a catalytic residue. Cys218 (proton donor) is an active-site residue. Glu288 is a catalytic residue.

Belongs to the MurB family. The cofactor is FAD.

The protein resides in the cytoplasm. It catalyses the reaction UDP-N-acetyl-alpha-D-muramate + NADP(+) = UDP-N-acetyl-3-O-(1-carboxyvinyl)-alpha-D-glucosamine + NADPH + H(+). It functions in the pathway cell wall biogenesis; peptidoglycan biosynthesis. In terms of biological role, cell wall formation. The protein is UDP-N-acetylenolpyruvoylglucosamine reductase of Wolbachia sp. subsp. Drosophila simulans (strain wRi).